The primary structure comprises 236 residues: Urease accessory protein UreF (236 aa).

The protein belongs to the UreF family. UreD, UreF and UreG form a complex that acts as a GTP-hydrolysis-dependent molecular chaperone, activating the urease apoprotein by helping to assemble the nickel containing metallocenter of UreC. The UreE protein probably delivers the nickel.

The protein resides in the cytoplasm. Functionally, required for maturation of urease via the functional incorporation of the urease nickel metallocenter. This Granulibacter bethesdensis (strain ATCC BAA-1260 / CGDNIH1) protein is Urease accessory protein UreF.